A 667-amino-acid polypeptide reads, in one-letter code: Glycine--tRNA ligase beta subunit (667 aa).

It belongs to the class-II aminoacyl-tRNA synthetase family. Tetramer of two alpha and two beta subunits.

Its subcellular location is the cytoplasm. It catalyses the reaction tRNA(Gly) + glycine + ATP = glycyl-tRNA(Gly) + AMP + diphosphate. This is Glycine--tRNA ligase beta subunit from Rickettsia canadensis (strain McKiel).